Consider the following 317-residue polypeptide: Pantothenate kinase (317 aa).

An ATP-binding site is contributed by 99–106; sequence GSVSVGKS.

Belongs to the prokaryotic pantothenate kinase family.

Its subcellular location is the cytoplasm. It catalyses the reaction (R)-pantothenate + ATP = (R)-4'-phosphopantothenate + ADP + H(+). It participates in cofactor biosynthesis; coenzyme A biosynthesis; CoA from (R)-pantothenate: step 1/5. The chain is Pantothenate kinase from Mannheimia succiniciproducens (strain KCTC 0769BP / MBEL55E).